A 152-amino-acid chain; its full sequence is MLMNSVIALTFLTASSNNGGLNIDVQQEEEKRINNDLNQYDTTLFNKDSKAVNDAIVKQKKERQQQIKNDMFQNQASHSTRLNETKKVLFSKSNLEKTSESDKSPYIQNKQEKKIFPYILMSVGAFLTLGFVIFSIHKGRRTKNESARKSNI.

Residues 1–114 (MLMNSVIALT…PYIQNKQEKK (114 aa)) are Cytoplasmic-facing. A helical membrane pass occupies residues 115–135 (IFPYILMSVGAFLTLGFVIFS). The Extracellular segment spans residues 136–152 (IHKGRRTKNESARKSNI).

The protein belongs to the EssA family.

The protein resides in the cell membrane. Component of the ESAT-6 secretion system (Ess). Required for the secretion of EsxA. This Staphylococcus aureus (strain MRSA252) protein is ESAT-6 secretion machinery protein EssA.